We begin with the raw amino-acid sequence, 139 residues long: ATP synthase epsilon chain (139 aa).

It belongs to the ATPase epsilon chain family. F-type ATPases have 2 components, CF(1) - the catalytic core - and CF(0) - the membrane proton channel. CF(1) has five subunits: alpha(3), beta(3), gamma(1), delta(1), epsilon(1). CF(0) has three main subunits: a, b and c.

It is found in the cell inner membrane. Its function is as follows. Produces ATP from ADP in the presence of a proton gradient across the membrane. In Pectobacterium carotovorum subsp. carotovorum (strain PC1), this protein is ATP synthase epsilon chain.